A 46-amino-acid polypeptide reads, in one-letter code: Iota-conotoxin-like r11b (46 aa).

4-hydroxyproline is present on residues Pro2 and Pro11. Intrachain disulfides connect Cys5–Cys19, Cys12–Cys22, Cys18–Cys27, and Cys21–Cys38. Pro29 is modified (4-hydroxyproline). Phe44 carries the post-translational modification D-phenylalanine.

Post-translationally, the natural D-Phe form of the peptide is more potent than the synthetic L-Phe form. In terms of tissue distribution, expressed by the venom duct.

It is found in the secreted. Its function is as follows. Iota-conotoxins bind to voltage-gated sodium channels (Nav) and act as agonists by shifting the voltage-dependence of activation to more hyperpolarized levels. Produces excitatory symptoms when injected intracranially into mice and is lethal at higher doses. Exposure to frog cutaneous pectoris induces spontaneous and repetitive action potentials. This effect is slowly reversible. Natural peptide (with D-Phe) is active on nerve, but not on muscle. Synthetic peptide (with L-Phe) is not active on both nerve and muscle. In Conus radiatus (Rayed cone), this protein is Iota-conotoxin-like r11b.